Here is a 1343-residue protein sequence, read N- to C-terminus: DNA-directed RNA polymerase subunit beta (1343 aa).

Belongs to the RNA polymerase beta chain family. The RNAP catalytic core consists of 2 alpha, 1 beta, 1 beta' and 1 omega subunit. When a sigma factor is associated with the core the holoenzyme is formed, which can initiate transcription.

The enzyme catalyses RNA(n) + a ribonucleoside 5'-triphosphate = RNA(n+1) + diphosphate. Functionally, DNA-dependent RNA polymerase catalyzes the transcription of DNA into RNA using the four ribonucleoside triphosphates as substrates. This Shewanella sediminis (strain HAW-EB3) protein is DNA-directed RNA polymerase subunit beta.